The sequence spans 272 residues: HMP-PP phosphatase (272 aa).

The active-site Nucleophile is the D8. 3 residues coordinate Mg(2+): D8, D10, and D212.

Belongs to the HAD-like hydrolase superfamily. Cof family. Requires Mg(2+) as cofactor.

The enzyme catalyses 4-amino-2-methyl-5-(diphosphooxymethyl)pyrimidine + H2O = 4-amino-2-methyl-5-(phosphooxymethyl)pyrimidine + phosphate + H(+). In terms of biological role, catalyzes the hydrolysis of 4-amino-2-methyl-5-hydroxymethylpyrimidine pyrophosphate (HMP-PP) to 4-amino-2-methyl-5-hydroxymethylpyrimidine phosphate (HMP-P). The chain is HMP-PP phosphatase from Escherichia coli O6:H1 (strain CFT073 / ATCC 700928 / UPEC).